The chain runs to 110 residues: BolA-like protein 3 (110 aa).

Belongs to the BolA/IbaG family. In terms of assembly, interacts with NFU1.

It is found in the mitochondrion. Its function is as follows. Acts as a mitochondrial iron-sulfur (Fe-S) cluster assembly factor that facilitates (Fe-S) cluster insertion into a subset of mitochondrial proteins. Probably acts together with NFU1. This is BolA-like protein 3 (Bola3) from Mus musculus (Mouse).